A 241-amino-acid polypeptide reads, in one-letter code: 1-(5-phosphoribosyl)-5-[(5-phosphoribosylamino)methylideneamino] imidazole-4-carboxamide isomerase (241 aa).

Asp-10 (proton acceptor) is an active-site residue. Catalysis depends on Asp-129, which acts as the Proton donor.

The protein belongs to the HisA/HisF family.

It is found in the cytoplasm. The catalysed reaction is 1-(5-phospho-beta-D-ribosyl)-5-[(5-phospho-beta-D-ribosylamino)methylideneamino]imidazole-4-carboxamide = 5-[(5-phospho-1-deoxy-D-ribulos-1-ylimino)methylamino]-1-(5-phospho-beta-D-ribosyl)imidazole-4-carboxamide. Its pathway is amino-acid biosynthesis; L-histidine biosynthesis; L-histidine from 5-phospho-alpha-D-ribose 1-diphosphate: step 4/9. In Salinispora arenicola (strain CNS-205), this protein is 1-(5-phosphoribosyl)-5-[(5-phosphoribosylamino)methylideneamino] imidazole-4-carboxamide isomerase.